The primary structure comprises 662 residues: Biosynthetic arginine decarboxylase (662 aa).

An N6-(pyridoxal phosphate)lysine modification is found at K126. Residue 308 to 318 (LNVGGGLGVDY) coordinates substrate.

This sequence belongs to the Orn/Lys/Arg decarboxylase class-II family. SpeA subfamily. Requires Mg(2+) as cofactor. The cofactor is pyridoxal 5'-phosphate.

The enzyme catalyses L-arginine + H(+) = agmatine + CO2. Functionally, catalyzes the biosynthesis of agmatine from arginine. This Deinococcus radiodurans (strain ATCC 13939 / DSM 20539 / JCM 16871 / CCUG 27074 / LMG 4051 / NBRC 15346 / NCIMB 9279 / VKM B-1422 / R1) protein is Biosynthetic arginine decarboxylase.